The following is an 84-amino-acid chain: Polyketide-8 synthase acyl carrier protein 1 (84 aa).

The 76-residue stretch at 7-82 (AARKQEIKEI…GVYVVVSEAA (76 aa)) folds into the Carrier domain. The residue at position 42 (Ser42) is an O-(pantetheine 4'-phosphoryl)serine.

4'-phosphopantetheine is transferred from CoA to a specific serine of the apo-ACP-like protein.

Its function is as follows. Acyl carrier protein. This chain is Polyketide-8 synthase acyl carrier protein 1, found in Streptomyces avermitilis (strain ATCC 31267 / DSM 46492 / JCM 5070 / NBRC 14893 / NCIMB 12804 / NRRL 8165 / MA-4680).